A 443-amino-acid polypeptide reads, in one-letter code: Phosphatidate cytidylyltransferase 2 (443 aa).

The span at Met-1–Ala-38 shows a compositional bias: basic and acidic residues. The disordered stretch occupies residues Met-1–Pro-51. The residue at position 20 (Ser-20) is a Phosphoserine. Residue Thr-30 is modified to Phosphothreonine. 3 positions are modified to phosphoserine: Ser-32, Ser-34, and Ser-36. Thr-50 carries the post-translational modification Phosphothreonine. Helical transmembrane passes span Met-78 to Met-98, Trp-129 to Phe-149, His-165 to Val-185, Leu-212 to Ile-232, Gly-261 to Ser-281, and Ser-338 to Phe-358.

This sequence belongs to the CDS family. Homodimer.

It is found in the endoplasmic reticulum membrane. The enzyme catalyses a 1,2-diacyl-sn-glycero-3-phosphate + CTP + H(+) = a CDP-1,2-diacyl-sn-glycerol + diphosphate. It carries out the reaction 1-octadecanoyl-2-(5Z,8Z,11Z,14Z-eicosatetraenoyl)-sn-glycero-3-phosphate + CTP + H(+) = 1-octadecanoyl-2-(5Z,8Z,11Z,14Z-eicosatetraenoyl)-sn-glycero-3-cytidine-5'-diphosphate + diphosphate. The catalysed reaction is 1-octadecanoyl-2-(9Z,12Z-octadecadienoyl)-sn-glycero-3-phosphate + CTP + H(+) = 1-octadecanoyl-2-(9Z,12Z-octadecadienoyl)-sn-glycero-3-cytidine-5'-diphosphate + diphosphate. It catalyses the reaction 1-hexadecanoyl-2-(5Z,8Z,11Z,14Z-eicosatetraenoyl)-sn-glycero-3-phosphate + CTP + H(+) = 1-hexadecanoyl-2-(5Z,8Z,11Z,14Z-eicosatetraenoyl)-sn-glycero-3-cytidine-5'-diphosphate + diphosphate. The enzyme catalyses 1,2-di-(5Z,8Z,11Z,14Z)-eicosatetraenoyl-sn-glycero-3-phosphate + CTP + H(+) = 1,2-di-(5Z,8Z,11Z,14Z-eicosatetraenoyl)-sn-glycero-3-cytidine-5'-diphosphate + diphosphate. It carries out the reaction 1-octadecanoyl-2-(9Z-octadecenoyl)-sn-glycero-3-phosphate + CTP + H(+) = 1-octadecanoyl-2-(9Z-octadecenoyl)-sn-glycero-3-cytidine-5'-diphosphate + diphosphate. The catalysed reaction is 1-octadecanoyl-2-(4Z,7Z,10Z,13Z,16Z,19Z-docosahexaenoyl)-sn-glycero-3-phosphate + CTP + H(+) = 1-octadecanoyl-2-(4Z,7Z,10Z,13Z,16Z,19Z-docosahexaenoyl)-sn-glycero-3-cytidine-5'-diphosphate + diphosphate. It catalyses the reaction 1,2-di-(9Z,12Z-octadecadienoyl)-sn-glycero-3-phosphate + CTP + H(+) = 1,2-di-(9Z,12Z-octadecadienoyl)-sn-glycero-3-cytidine-5'-diphosphate + diphosphate. The enzyme catalyses 1,2-di-(9Z-octadecenoyl)-sn-glycero-3-phosphate + CTP + H(+) = 1,2-di-(9Z-octadecenoyl)-sn-glycero-3-cytidine-5'-diphosphate + diphosphate. It functions in the pathway phospholipid metabolism; CDP-diacylglycerol biosynthesis; CDP-diacylglycerol from sn-glycerol 3-phosphate: step 3/3. Functionally, catalyzes the conversion of phosphatidic acid (PA) to CDP-diacylglycerol (CDP-DAG), an essential intermediate in the synthesis of phosphatidylglycerol, cardiolipin and phosphatidylinositol. Exhibits specificity for the nature of the acyl chains at the sn-1 and sn-2 positions in the substrate, PA and the preferred acyl chain composition is 1-stearoyl-2-arachidonoyl-sn-phosphatidic acid. Plays an important role in regulating the growth and maturation of lipid droplets which are storage organelles at the center of lipid and energy homeostasis. The chain is Phosphatidate cytidylyltransferase 2 from Rattus norvegicus (Rat).